The following is a 153-amino-acid chain: SsrA-binding protein (153 aa).

This sequence belongs to the SmpB family.

It localises to the cytoplasm. In terms of biological role, required for rescue of stalled ribosomes mediated by trans-translation. Binds to transfer-messenger RNA (tmRNA), required for stable association of tmRNA with ribosomes. tmRNA and SmpB together mimic tRNA shape, replacing the anticodon stem-loop with SmpB. tmRNA is encoded by the ssrA gene; the 2 termini fold to resemble tRNA(Ala) and it encodes a 'tag peptide', a short internal open reading frame. During trans-translation Ala-aminoacylated tmRNA acts like a tRNA, entering the A-site of stalled ribosomes, displacing the stalled mRNA. The ribosome then switches to translate the ORF on the tmRNA; the nascent peptide is terminated with the 'tag peptide' encoded by the tmRNA and targeted for degradation. The ribosome is freed to recommence translation, which seems to be the essential function of trans-translation. This is SsrA-binding protein from Lactobacillus delbrueckii subsp. bulgaricus (strain ATCC 11842 / DSM 20081 / BCRC 10696 / JCM 1002 / NBRC 13953 / NCIMB 11778 / NCTC 12712 / WDCM 00102 / Lb 14).